Here is a 205-residue protein sequence, read N- to C-terminus: Putative 3-methyladenine DNA glycosylase (205 aa).

The protein belongs to the DNA glycosylase MPG family.

The sequence is that of Putative 3-methyladenine DNA glycosylase from Clostridium perfringens (strain SM101 / Type A).